A 336-amino-acid polypeptide reads, in one-letter code: Large ribosomal subunit protein uL10 (336 aa).

Residues 305–336 (AVVATEEAPKAETKKEEKKEEAAPAAGLGLLF) are disordered. A compositionally biased stretch (basic and acidic residues) spans 311 to 326 (EAPKAETKKEEKKEEA).

Belongs to the universal ribosomal protein uL10 family. As to quaternary structure, part of the 50S ribosomal subunit. Forms part of the ribosomal stalk which helps the ribosome interact with GTP-bound translation factors. Forms a heptameric L10(L12)2(L12)2(L12)2 complex, where L10 forms an elongated spine to which the L12 dimers bind in a sequential fashion.

In terms of biological role, forms part of the ribosomal stalk, playing a central role in the interaction of the ribosome with GTP-bound translation factors. The protein is Large ribosomal subunit protein uL10 of Methanococcus vannielii (strain ATCC 35089 / DSM 1224 / JCM 13029 / OCM 148 / SB).